The primary structure comprises 392 residues: Tryptophan 2,3-dioxygenase (392 aa).

Substrate-binding positions include 57–61 and Arg-128; that span reads FIVTH. His-313 serves as a coordination point for heme. Position 328 (Thr-328) interacts with substrate.

The protein belongs to the tryptophan 2,3-dioxygenase family. As to quaternary structure, homotetramer. Dimer of dimers. The cofactor is heme.

It carries out the reaction L-tryptophan + O2 = N-formyl-L-kynurenine. The protein operates within amino-acid degradation; L-tryptophan degradation via kynurenine pathway; L-kynurenine from L-tryptophan: step 1/2. Its pathway is pigment biosynthesis; ommochrome biosynthesis. Its function is as follows. Heme-dependent dioxygenase that catalyzes the oxidative cleavage of the L-tryptophan (L-Trp) pyrrole ring and converts L-tryptophan to N-formyl-L-kynurenine. Catalyzes the oxidative cleavage of the indole moiety. The chain is Tryptophan 2,3-dioxygenase from Anopheles gambiae (African malaria mosquito).